Consider the following 757-residue polypeptide: Primary amine oxidase (757 aa).

The N-terminal stretch at Met-1 to Ala-30 is a signal peptide. Residues Tyr-411 to Leu-422 and Val-493 to Tyr-498 contribute to the substrate site. The active-site Proton acceptor is the Asp-413. The Schiff-base intermediate with substrate; via topaquinone role is filled by Tyr-496. Residue Tyr-496 is modified to 2',4',5'-topaquinone. Cu cation contacts are provided by His-554 and His-556. Ca(2+)-binding residues include Asp-563, Leu-564, Asp-565, Glu-603, Tyr-697, Asp-700, Glu-702, Asp-708, and Ala-709. Asp-563 serves as a coordination point for Mn(2+). Residue Asp-565 coordinates Mn(2+). Residues Pro-680 to Asn-701 form a disordered region. Residue Asp-708 participates in Mn(2+) binding. His-719 is a binding site for Cu cation.

It belongs to the copper/topaquinone oxidase family. Homodimer. Requires Cu cation as cofactor. Zn(2+) is required as a cofactor. Ca(2+) serves as cofactor. It depends on L-topaquinone as a cofactor. The cofactor is Mn(2+). Topaquinone (TPQ) is generated by copper-dependent autoxidation of a specific tyrosyl residue.

Its subcellular location is the periplasm. The enzyme catalyses a primary methyl amine + O2 + H2O = an aldehyde + H2O2 + NH4(+). It carries out the reaction 2-phenylethylamine + O2 + H2O = 2-phenylacetaldehyde + H2O2 + NH4(+). It functions in the pathway amino-acid degradation; L-phenylalanine degradation; phenylacetate from L-phenylalanine: step 2/3. With respect to regulation, inhibited by 2-hydrazinopyridine. Its function is as follows. The enzyme prefers aromatic over aliphatic amines. The polypeptide is Primary amine oxidase (tynA) (Escherichia coli (strain K12)).